The sequence spans 413 residues: Aspartate aminotransferase, cytoplasmic (413 aa).

L-aspartate-binding residues include Gly39, Trp141, and Asn195. At Lys259 the chain carries N6-(pyridoxal phosphate)lysine. Residue Arg387 participates in L-aspartate binding.

This sequence belongs to the class-I pyridoxal-phosphate-dependent aminotransferase family. Homodimer. Requires pyridoxal 5'-phosphate as cofactor.

The protein resides in the cytoplasm. It carries out the reaction L-aspartate + 2-oxoglutarate = oxaloacetate + L-glutamate. The catalysed reaction is L-cysteine + 2-oxoglutarate = 2-oxo-3-sulfanylpropanoate + L-glutamate. It catalyses the reaction (2S)-2-aminobutanoate + 2-oxoglutarate = 2-oxobutanoate + L-glutamate. The enzyme catalyses 3-sulfino-L-alanine + 2-oxoglutarate = 3-sulfinopyruvate + L-glutamate. In terms of biological role, biosynthesis of L-glutamate from L-aspartate or L-cysteine. Important regulator of levels of glutamate, the major excitatory neurotransmitter of the vertebrate central nervous system. Acts as a scavenger of glutamate in brain neuroprotection. The aspartate aminotransferase activity is involved in hepatic glucose synthesis during development and in adipocyte glyceroneogenesis. Using L-cysteine as substrate, regulates levels of mercaptopyruvate, an important source of hydrogen sulfide. Mercaptopyruvate is converted into H(2)S via the action of 3-mercaptopyruvate sulfurtransferase (3MST). Hydrogen sulfide is an important synaptic modulator and neuroprotectant in the brain. The sequence is that of Aspartate aminotransferase, cytoplasmic from Bos taurus (Bovine).